A 213-amino-acid chain; its full sequence is Pyridoxine/pyridoxamine 5'-phosphate oxidase (213 aa).

FMN is bound by residues 60–65, 75–76, Lys-82, and Gln-104; these read RMVLMK and YS. Residue Lys-65 coordinates substrate. Residues Tyr-122 and Arg-126 each contribute to the substrate site. Residues 139–140 and Trp-184 contribute to the FMN site; that span reads QS. 190 to 192 contributes to the substrate binding site; that stretch reads RLH. Arg-194 is a binding site for FMN.

Belongs to the pyridoxamine 5'-phosphate oxidase family. In terms of assembly, homodimer. The cofactor is FMN.

The catalysed reaction is pyridoxamine 5'-phosphate + O2 + H2O = pyridoxal 5'-phosphate + H2O2 + NH4(+). It catalyses the reaction pyridoxine 5'-phosphate + O2 = pyridoxal 5'-phosphate + H2O2. It functions in the pathway cofactor metabolism; pyridoxal 5'-phosphate salvage; pyridoxal 5'-phosphate from pyridoxamine 5'-phosphate: step 1/1. Its pathway is cofactor metabolism; pyridoxal 5'-phosphate salvage; pyridoxal 5'-phosphate from pyridoxine 5'-phosphate: step 1/1. Functionally, catalyzes the oxidation of either pyridoxine 5'-phosphate (PNP) or pyridoxamine 5'-phosphate (PMP) into pyridoxal 5'-phosphate (PLP). The sequence is that of Pyridoxine/pyridoxamine 5'-phosphate oxidase from Bradyrhizobium diazoefficiens (strain JCM 10833 / BCRC 13528 / IAM 13628 / NBRC 14792 / USDA 110).